The sequence spans 296 residues: MHDEDQYLHLIRRVLDTGDLRPDRTGTGTISLFAPPNLRFSLRESTVPLLTTKRTFLRGIVEELLWFTNGLTDSKILSDKGVKIWDGNGSKAFLESRGLGHRREGDLGPVYGFQWRHFGAEYEDCDADYAGKGVDQLRECIRKIKENPTDRRIILSAWNPKDIPSMALPPCHMLCQFYVHLPADTAKPELSCLMFQRSADLGLGIPFNIASYALLTHMIAHVTGTTARELIIQLGDAHVYRDHVEALEVQLQREPRPFPKLRWARDGITDIEDFEYSDFVIEGYNPHPSIAMKMSV.

Residues Arg24 and 151-152 each bind dUMP; that span reads RR. The active-site Nucleophile is Cys171. DUMP-binding positions include 197 to 200, Asn208, and 238 to 240; these read RSAD and HVY. Asp200 provides a ligand contact to (6R)-5,10-methylene-5,6,7,8-tetrahydrofolate.

This sequence belongs to the thymidylate synthase family. As to quaternary structure, homodimer.

The catalysed reaction is dUMP + (6R)-5,10-methylene-5,6,7,8-tetrahydrofolate = 7,8-dihydrofolate + dTMP. The protein operates within pyrimidine metabolism; dTTP biosynthesis. This is Thymidylate synthase (tms1) from Agaricus bisporus (White button mushroom).